Reading from the N-terminus, the 559-residue chain is Dihydroxy-acid dehydratase 2 (559 aa).

Cys-53 contacts [2Fe-2S] cluster. Mg(2+) is bound at residue Asp-85. Position 126 (Cys-126) interacts with [2Fe-2S] cluster. Residues Asp-127 and Lys-128 each contribute to the Mg(2+) site. Lys-128 carries the N6-carboxylysine modification. Position 195 (Cys-195) interacts with [2Fe-2S] cluster. Glu-446 contacts Mg(2+). Ser-472 (proton acceptor) is an active-site residue.

It belongs to the IlvD/Edd family. In terms of assembly, homodimer. The cofactor is [2Fe-2S] cluster. Mg(2+) is required as a cofactor.

It carries out the reaction (2R)-2,3-dihydroxy-3-methylbutanoate = 3-methyl-2-oxobutanoate + H2O. The enzyme catalyses (2R,3R)-2,3-dihydroxy-3-methylpentanoate = (S)-3-methyl-2-oxopentanoate + H2O. It participates in amino-acid biosynthesis; L-isoleucine biosynthesis; L-isoleucine from 2-oxobutanoate: step 3/4. Its pathway is amino-acid biosynthesis; L-valine biosynthesis; L-valine from pyruvate: step 3/4. Functions in the biosynthesis of branched-chain amino acids. Catalyzes the dehydration of (2R,3R)-2,3-dihydroxy-3-methylpentanoate (2,3-dihydroxy-3-methylvalerate) into 2-oxo-3-methylpentanoate (2-oxo-3-methylvalerate) and of (2R)-2,3-dihydroxy-3-methylbutanoate (2,3-dihydroxyisovalerate) into 2-oxo-3-methylbutanoate (2-oxoisovalerate), the penultimate precursor to L-isoleucine and L-valine, respectively. The polypeptide is Dihydroxy-acid dehydratase 2 (Pseudoalteromonas translucida (strain TAC 125)).